The chain runs to 193 residues: Holliday junction branch migration complex subunit RuvA (193 aa).

The interval 1 to 64 is domain I; that stretch reads MIGRIAGVLL…EDAHLLYGFL (64 aa). A domain II region spans residues 65–139; sequence TPQERSTFRE…GKLGADLGAM (75 aa). Residues 139-143 form a flexible linker region; it reads MAGAA. The domain III stretch occupies residues 144–193; that stretch reads SQSDHASDILNALLALGYSEKEGLAAIKNVPAGTGVSEGIKLALKALSKA.

This sequence belongs to the RuvA family. In terms of assembly, homotetramer. Forms an RuvA(8)-RuvB(12)-Holliday junction (HJ) complex. HJ DNA is sandwiched between 2 RuvA tetramers; dsDNA enters through RuvA and exits via RuvB. An RuvB hexamer assembles on each DNA strand where it exits the tetramer. Each RuvB hexamer is contacted by two RuvA subunits (via domain III) on 2 adjacent RuvB subunits; this complex drives branch migration. In the full resolvosome a probable DNA-RuvA(4)-RuvB(12)-RuvC(2) complex forms which resolves the HJ.

The protein localises to the cytoplasm. Its function is as follows. The RuvA-RuvB-RuvC complex processes Holliday junction (HJ) DNA during genetic recombination and DNA repair, while the RuvA-RuvB complex plays an important role in the rescue of blocked DNA replication forks via replication fork reversal (RFR). RuvA specifically binds to HJ cruciform DNA, conferring on it an open structure. The RuvB hexamer acts as an ATP-dependent pump, pulling dsDNA into and through the RuvAB complex. HJ branch migration allows RuvC to scan DNA until it finds its consensus sequence, where it cleaves and resolves the cruciform DNA. The protein is Holliday junction branch migration complex subunit RuvA of Paraburkholderia phymatum (strain DSM 17167 / CIP 108236 / LMG 21445 / STM815) (Burkholderia phymatum).